Reading from the N-terminus, the 371-residue chain is DNA replication and repair protein RecF (371 aa).

Position 30 to 37 (30 to 37 (GQNGSGKT)) interacts with ATP.

This sequence belongs to the RecF family.

Its subcellular location is the cytoplasm. Functionally, the RecF protein is involved in DNA metabolism; it is required for DNA replication and normal SOS inducibility. RecF binds preferentially to single-stranded, linear DNA. It also seems to bind ATP. This is DNA replication and repair protein RecF from Chlorobium phaeovibrioides (strain DSM 265 / 1930) (Prosthecochloris vibrioformis (strain DSM 265)).